The sequence spans 1901 residues: Methylcytosine dioxygenase tet3 (1901 aa).

The segment at 58–99 (SNKKRKRCGVCVPCLRKEPCGACYNCVNRSTSHQICKMRKCE) adopts a CXXC-type zinc-finger fold. Cys-65, Cys-68, Cys-71, Cys-77, Cys-80, Cys-83, Cys-93, and Cys-98 together coordinate Zn(2+). Disordered stretches follow at residues 434-455 (KNAL…KKSS), 602-658 (WWVP…EGSA), 751-787 (KDQC…QNDL), and 808-867 (DFSL…PVSR). Composition is skewed to polar residues over residues 442–455 (SPRQ…KKSS) and 602–614 (WWVP…PVSK). Residues 640–652 (KPQRKQVQIKKPK) show a composition bias toward basic residues. A compositionally biased stretch (low complexity) spans 758-771 (STHDTSSSSGQGDS). A compositionally biased stretch (polar residues) spans 847 to 867 (ENSTKPATHSNPALSNNPVSR). Zn(2+) contacts are provided by Cys-957, Cys-959, Cys-1017, His-1043, and Cys-1045. Arg-1085 is a binding site for 2-oxoglutarate. 5 residues coordinate Zn(2+): Cys-1095, Cys-1097, Cys-1113, Cys-1122, and Cys-1182. Cys-1198 is a 2-oxoglutarate binding site. His-1204 lines the Zn(2+) pocket. Residues His-1206 and Asp-1208 each coordinate Fe cation. His-1240 is a binding site for 2-oxoglutarate. Disordered regions lie at residues 1282–1338 (SEPA…QQTK), 1457–1501 (YGSE…VETT), 1591–1624 (SNAP…PGKV), and 1680–1745 (SATP…DEEI). Basic and acidic residues predominate over residues 1291 to 1325 (RQLEAKKAAAEKKKLQKEKLVSPDKTKQEPSDKKT). Residues 1326–1338 (CQQNPGVPQQQTK) are compositionally biased toward polar residues. A compositionally biased stretch (basic and acidic residues) spans 1465–1474 (SFRRSSEVPH). Residues 1477 to 1487 (SLQNPSSQKSV) are compositionally biased toward polar residues. 2 stretches are compositionally biased toward polar residues: residues 1680-1693 (SATP…TPCS) and 1702-1719 (SFPN…SQNH). His-1780 contacts Fe cation. 1795–1797 (RIS) contacts 2-oxoglutarate.

The protein belongs to the TET family. Fe(2+) serves as cofactor. Zn(2+) is required as a cofactor.

The protein localises to the nucleus. Its subcellular location is the chromosome. The catalysed reaction is a 5-methyl-2'-deoxycytidine in DNA + 2-oxoglutarate + O2 = a 5-hydroxymethyl-2'-deoxycytidine in DNA + succinate + CO2. The enzyme catalyses a 5-hydroxymethyl-2'-deoxycytidine in DNA + 2-oxoglutarate + O2 = a 5-formyl-2'-deoxycytidine in DNA + succinate + CO2 + H2O. It catalyses the reaction a 5-formyl-2'-deoxycytidine in DNA + 2-oxoglutarate + O2 = a 5-carboxyl-2'-deoxycytidine in DNA + succinate + CO2 + H(+). Functionally, dioxygenase that catalyzes the conversion of the modified genomic base 5-methylcytosine (5mC) into 5-hydroxymethylcytosine (5hmC) and plays a key role in epigenetic chromatin reprogramming during embryonic development. Conversion of 5mC into 5hmC probably constitutes the first step in cytosine demethylation. Selectively binds to the promoter region of target genes and contributes to regulate the expression of numerous developmental genes, including pax6, rax, sox9 and six3. May also contribute to the regulation of target genes in ways that do not require its enzyme activity. The sequence is that of Methylcytosine dioxygenase tet3 from Xenopus tropicalis (Western clawed frog).